The sequence spans 476 residues: ATP synthase subunit beta, chloroplastic (476 aa).

156–163 (GGAGVGKT) is an ATP binding site.

It belongs to the ATPase alpha/beta chains family. As to quaternary structure, F-type ATPases have 2 components, CF(1) - the catalytic core - and CF(0) - the membrane proton channel. CF(1) has five subunits: alpha(3), beta(3), gamma(1), delta(1), epsilon(1). CF(0) has four main subunits: a(1), b(1), b'(1) and c(9-12).

It localises to the plastid. The protein localises to the chloroplast thylakoid membrane. The catalysed reaction is ATP + H2O + 4 H(+)(in) = ADP + phosphate + 5 H(+)(out). Its function is as follows. Produces ATP from ADP in the presence of a proton gradient across the membrane. The catalytic sites are hosted primarily by the beta subunits. The polypeptide is ATP synthase subunit beta, chloroplastic (Fucus vesiculosus (Bladder wrack)).